The chain runs to 377 residues: Formate dehydrogenase, mitochondrial (377 aa).

Residues 1 to 29 (MAAMWRAAARQLVDRAVGSRAAHTSAGSK) constitute a mitochondrion transit peptide. I121 and N145 together coordinate substrate. NAD(+)-binding positions include T146, D220, 255 to 259 (PLTEK), N281, D307, and 331 to 334 (HISG).

The protein belongs to the D-isomer specific 2-hydroxyacid dehydrogenase family. FDH subfamily. In terms of assembly, homodimer.

Its subcellular location is the mitochondrion. It carries out the reaction formate + NAD(+) = CO2 + NADH. In terms of biological role, catalyzes the NAD(+)-dependent oxidation of formate to carbon dioxide. Involved in the cell stress response. The polypeptide is Formate dehydrogenase, mitochondrial (Hordeum vulgare (Barley)).